Reading from the N-terminus, the 407-residue chain is Dephospho-CoA kinase (407 aa).

Residues 3-204 enclose the DPCK domain; sequence RIGLTGGIGA…QPFAHNLAQR (202 aa). 11 to 16 lines the ATP pocket; it reads GAGKSL. The segment at 196–407 is UPF0157; it reads PFAHNLAQRQ…EWADAVHWRP (212 aa).

In the N-terminal section; belongs to the CoaE family. This sequence in the C-terminal section; belongs to the UPF0157 (GrpB) family.

The protein localises to the cytoplasm. The enzyme catalyses 3'-dephospho-CoA + ATP = ADP + CoA + H(+). It participates in cofactor biosynthesis; coenzyme A biosynthesis; CoA from (R)-pantothenate: step 5/5. Its function is as follows. Catalyzes the phosphorylation of the 3'-hydroxyl group of dephosphocoenzyme A to form coenzyme A. This is Dephospho-CoA kinase from Mycobacterium bovis (strain ATCC BAA-935 / AF2122/97).